The sequence spans 1050 residues: ATP-dependent DNA helicase MPH1 (1050 aa).

Residues 95-262 (IVQRAFYHNL…EIIDNLNISK (168 aa)) enclose the Helicase ATP-binding domain. 108-115 (LPTGLGKT) contacts ATP. Residues 210-213 (DEAH) carry the DEAH box motif. Residues 431–631 (KIEAMMEELD…LIDLKEQNRM (201 aa)) enclose the Helicase C-terminal domain. 2 disordered regions span residues 493–524 (DESNFGKKSKGKRVGKKQQDDSKSSSENAQIN) and 743–821 (DSDE…PPKR). Residues 499-508 (KKSKGKRVGK) are compositionally biased toward basic residues. Over residues 786–799 (RTLDQHHSASEERG) the composition is skewed to basic and acidic residues. Residues 800–810 (INSNFSHESNL) are compositionally biased toward polar residues.

Belongs to the DEAD box helicase family. DEAH subfamily. FANCM sub-subfamily. As to quaternary structure, interacts with the MHF histone-fold complex to form the FANCM-MHF complex.

Its subcellular location is the nucleus. It carries out the reaction ATP + H2O = ADP + phosphate + H(+). ATP-dependent DNA helicase involved in DNA damage repair by homologous recombination and in genome maintenance. Capable of unwinding D-loops. Plays a role in limiting crossover recombinants during mitotic DNA double-strand break (DSB) repair. Component of a FANCM-MHF complex which promotes gene conversion at blocked replication forks, probably by reversal of the stalled fork. In Scheffersomyces stipitis (strain ATCC 58785 / CBS 6054 / NBRC 10063 / NRRL Y-11545) (Yeast), this protein is ATP-dependent DNA helicase MPH1.